A 399-amino-acid chain; its full sequence is Zinc metalloproteinase nas-25 (399 aa).

Residues 1–20 form the signal peptide; sequence MQIYLGITICLVAFLTVIDC. The 197-residue stretch at 41–237 folds into the Peptidase M12A domain; it reads QVQRDLTYRW…DQINQYYQCY (197 aa). N-linked (GlcNAc...) asparagine glycans are attached at residues Asn52 and Asn61. Intrachain disulfides connect Cys82/Cys236, Cys106/Cys126, Cys240/Cys260, and Cys265/Cys274. Residue His134 coordinates Zn(2+). Residue Glu135 is part of the active site. Positions 138 and 144 each coordinate Zn(2+). Residues 232-275 form the EGF-like domain; it reads QYYQCYDSCRNAGQLANCANGGIPNPNNCQVCNCPMGYGGDLCD. The N-linked (GlcNAc...) asparagine glycan is linked to Asn371.

Requires Zn(2+) as cofactor. Expressed in pharyngeal muscles, pharyngeal-intestinal valve, rectal gland cells and arcade cells.

Its subcellular location is the secreted. In terms of biological role, metalloprotease. This Caenorhabditis elegans protein is Zinc metalloproteinase nas-25 (nas-25).